Here is a 353-residue protein sequence, read N- to C-terminus: DNA integrity scanning protein DisA (353 aa).

One can recognise a DAC domain in the interval 6–144 (DKELMNILKI…GGIKYVLRDS (139 aa)). Residues Gly73, Leu91, and 104-108 (TRHRT) each bind ATP.

The protein belongs to the DisA family. As to quaternary structure, homooctamer. The cofactor is Mg(2+).

It carries out the reaction 2 ATP = 3',3'-c-di-AMP + 2 diphosphate. Functionally, participates in a DNA-damage check-point that is active prior to asymmetric division when DNA is damaged. DisA forms globular foci that rapidly scan along the chromosomes during sporulation, searching for lesions. When a lesion is present, DisA pauses at the lesion site. This triggers a cellular response that culminates in a temporary block in sporulation initiation. Also has diadenylate cyclase activity, catalyzing the condensation of 2 ATP molecules into cyclic di-AMP (c-di-AMP). c-di-AMP acts as a signaling molecule that couples DNA integrity with progression of sporulation. The rise in c-di-AMP level generated by DisA while scanning the chromosome, operates as a positive signal that advances sporulation; upon encountering a lesion, the DisA focus arrests at the damaged site and halts c-di-AMP synthesis. The sequence is that of DNA integrity scanning protein DisA from Clostridium botulinum (strain Loch Maree / Type A3).